A 431-amino-acid chain; its full sequence is Glutamate-1-semialdehyde 2,1-aminomutase (431 aa).

Position 265 is an N6-(pyridoxal phosphate)lysine (K265).

It belongs to the class-III pyridoxal-phosphate-dependent aminotransferase family. HemL subfamily. As to quaternary structure, homodimer. It depends on pyridoxal 5'-phosphate as a cofactor.

The protein resides in the cytoplasm. It carries out the reaction (S)-4-amino-5-oxopentanoate = 5-aminolevulinate. It participates in porphyrin-containing compound metabolism; protoporphyrin-IX biosynthesis; 5-aminolevulinate from L-glutamyl-tRNA(Glu): step 2/2. This chain is Glutamate-1-semialdehyde 2,1-aminomutase, found in Aliivibrio fischeri (strain MJ11) (Vibrio fischeri).